The following is a 254-amino-acid chain: DNA repair protein RecO (254 aa).

It belongs to the RecO family.

Involved in DNA repair and RecF pathway recombination. The chain is DNA repair protein RecO from Verminephrobacter eiseniae (strain EF01-2).